Consider the following 77-residue polypeptide: Large ribosomal subunit protein bL28 (77 aa).

It belongs to the bacterial ribosomal protein bL28 family.

The protein is Large ribosomal subunit protein bL28 of Cupriavidus necator (strain ATCC 17699 / DSM 428 / KCTC 22496 / NCIMB 10442 / H16 / Stanier 337) (Ralstonia eutropha).